A 497-amino-acid polypeptide reads, in one-letter code: MSNQHIEELNDQQIVRREKMMALAEQGIDPFGKRFDRTANSAELKEKYADKTKEELHELNETAIVAGRLMTKRGKGKVGFAHLQDREGQIQLYVRKDSVGEDNYEIFKKADLGDFIGVEGEVMRTDMGELSIKATKLTHLSKSLRPLPEKFHGLTDIETIYRKRHLDLISNRESFDRFVTRSKMISEIRRYLDGLDFLEVETPVLHNEAGGAAARPFVTHHNAQNIDMVLRIATELHLKRLIVGGMERVYEIGRIFRNEGMDATHNPEFTSIEVYQAYADYLDIMNLTEGIIQHAAKAVKGDGPIDYQGTEIRINEPFKRVHMVDAIKEVTGVDFWPEMTVEEAIALAKEKQVPLEKHFTSVGHIINAFFEEFVEETLVQPTFVFGHPVEVSPLAKKNPEDTRFTDRFELFIMTKEYANAFTELNDPIDQLSRFEAQAQAKELGDDEATGIDYDFVEALEYGMPPTGGLGIGIDRLCMLLTNTTTIRDVLLFPTMKP.

Residues Glu409 and Glu416 each coordinate Mg(2+).

This sequence belongs to the class-II aminoacyl-tRNA synthetase family. In terms of assembly, homodimer. Requires Mg(2+) as cofactor.

It is found in the cytoplasm. The catalysed reaction is tRNA(Lys) + L-lysine + ATP = L-lysyl-tRNA(Lys) + AMP + diphosphate. The polypeptide is Lysine--tRNA ligase (Streptococcus pyogenes serotype M49 (strain NZ131)).